The chain runs to 320 residues: tRNA (guanine(10)-N2)-dimethyltransferase (320 aa).

In terms of domain architecture, THUMP spans 46 to 136 (EKFFERLAYT…DDKCYVGLLE (91 aa)).

This sequence belongs to the methyltransferase superfamily. Trm-G10 family. As to quaternary structure, monomer.

It localises to the cytoplasm. It carries out the reaction guanosine(10) in tRNA + 2 S-adenosyl-L-methionine = N(2)-dimethylguanosine(10) in tRNA + 2 S-adenosyl-L-homocysteine + 2 H(+). Catalyzes the adenosylmethionine-dependent methylation of the exocyclic amino group (N(2)) of guanosine at position 10 of various tRNAs. Acts via a two-step process that leads to the formation of either N(2)-monomethyl (m(2)G) or N(2)-dimethylguanosine (m(2)(2)G). The chain is tRNA (guanine(10)-N2)-dimethyltransferase (trmG10) from Archaeoglobus fulgidus (strain ATCC 49558 / DSM 4304 / JCM 9628 / NBRC 100126 / VC-16).